Consider the following 153-residue polypeptide: Ribonuclease K6 (153 aa).

A signal peptide spans M1 to Q27. H41 acts as the Proton acceptor in catalysis. 4 disulfide bridges follow: C49-C107, C63-C117, C81-C132, and C88-C95. N58 is a glycosylation site (N-linked (GlcNAc...) asparagine). K64–T68 is a substrate binding site. N85 carries an N-linked (GlcNAc...) asparagine glycan. K89 lines the substrate pocket. The Proton donor role is filled by H148.

This sequence belongs to the pancreatic ribonuclease family. In terms of assembly, interacts (via N-terminus) with bacterial lipopolysaccharide (LPS). Highly expressed in spleen (at protein level). Has little or no expression in healthy kidneys (at protein level). Detected at high levels in infected kidneys (at protein level). Expressed at low levels in bladder. Also detected in skeletal muscle, heart and bone marrow.

It is found in the secreted. The protein localises to the lysosome. Its subcellular location is the cytoplasmic granule. Functionally, ribonuclease which shows a preference for the pyrimidines uridine and cytosine. Has potent antibacterial activity against a range of Gram-positive and Gram-negative bacteria, including P.aeruginosa, A.baumanii, M.luteus, S.aureus, E.faecalis, E.faecium, S.saprophyticus and E.coli. Causes loss of bacterial membrane integrity, and also promotes agglutination of Gram-negative bacteria. Probably contributes to urinary tract sterility. Bactericidal activity is independent of RNase activity. This Mus musculus (Mouse) protein is Ribonuclease K6 (Rnase6).